The sequence spans 138 residues: Small ribosomal subunit protein uS11c (138 aa).

The tract at residues 1-23 (MAKTIPRIGSRKNGRIGSRKNTR) is disordered. Residues 9–23 (GSRKNGRIGSRKNTR) are compositionally biased toward basic residues.

It belongs to the universal ribosomal protein uS11 family. Part of the 30S ribosomal subunit.

It localises to the plastid. The protein resides in the chloroplast. The polypeptide is Small ribosomal subunit protein uS11c (Daucus carota (Wild carrot)).